We begin with the raw amino-acid sequence, 148 residues long: Ubiquitin-like protein 4A (148 aa).

In terms of domain architecture, Ubiquitin-like spans 1 to 76 (MQLTVKALKG…LNLMVKDQVA (76 aa)).

As to quaternary structure, component of the bag6/bat3 complex.

It localises to the cytoplasm. Its subcellular location is the cytosol. The protein localises to the nucleus. As part of a cytosolic protein quality control complex, the bag6/bat3 complex, maintains misfolded and hydrophobic patches-containing proteins in a soluble state and participates in their proper delivery to the endoplasmic reticulum or alternatively can promote their sorting to the proteasome where they undergo degradation. The bag6/bat3 complex is involved in the post-translational delivery of tail-anchored/type II transmembrane proteins to the endoplasmic reticulum membrane. Similarly, the bag6/bat3 complex also functions as a sorting platform for proteins of the secretory pathway that are mislocalized to the cytosol either delivering them to the proteasome for degradation or to the endoplasmic reticulum. The bag6/bat3 complex also plays a role in the endoplasmic reticulum-associated degradation (ERAD), a quality control mechanism that eliminates unwanted proteins of the endoplasmic reticulum through their retrotranslocation to the cytosol and their targeting to the proteasome. It maintains these retrotranslocated proteins in an unfolded yet soluble state condition in the cytosol to ensure their proper delivery to the proteasome. The chain is Ubiquitin-like protein 4A (ubl4a) from Xenopus laevis (African clawed frog).